We begin with the raw amino-acid sequence, 240 residues long: Small ribosomal subunit protein uS2 (240 aa).

It belongs to the universal ribosomal protein uS2 family.

In Wigglesworthia glossinidia brevipalpis, this protein is Small ribosomal subunit protein uS2.